Here is a 689-residue protein sequence, read N- to C-terminus: Glycine--tRNA ligase beta subunit (689 aa).

Belongs to the class-II aminoacyl-tRNA synthetase family. In terms of assembly, tetramer of two alpha and two beta subunits.

The protein resides in the cytoplasm. The catalysed reaction is tRNA(Gly) + glycine + ATP = glycyl-tRNA(Gly) + AMP + diphosphate. This Escherichia coli O8 (strain IAI1) protein is Glycine--tRNA ligase beta subunit.